Consider the following 321-residue polypeptide: Thioredoxin reductase (321 aa).

36-43 provides a ligand contact to FAD; that stretch reads TGMEKGGQ. The cysteines at positions 136 and 139 are disulfide-linked. 287-296 is an FAD binding site; it reads DVMDHIYRQA.

It belongs to the class-II pyridine nucleotide-disulfide oxidoreductase family. In terms of assembly, homodimer. FAD is required as a cofactor.

Its subcellular location is the cytoplasm. The catalysed reaction is [thioredoxin]-dithiol + NADP(+) = [thioredoxin]-disulfide + NADPH + H(+). This Escherichia coli O157:H7 protein is Thioredoxin reductase (trxB).